The chain runs to 89 residues: Small ribosomal subunit protein uS15 (89 aa).

A compositionally biased stretch (basic and acidic residues) spans methionine 1–aspartate 21. The tract at residues methionine 1 to serine 24 is disordered.

The protein belongs to the universal ribosomal protein uS15 family. In terms of assembly, part of the 30S ribosomal subunit. Forms a bridge to the 50S subunit in the 70S ribosome, contacting the 23S rRNA.

Its function is as follows. One of the primary rRNA binding proteins, it binds directly to 16S rRNA where it helps nucleate assembly of the platform of the 30S subunit by binding and bridging several RNA helices of the 16S rRNA. Forms an intersubunit bridge (bridge B4) with the 23S rRNA of the 50S subunit in the ribosome. This Rhodopseudomonas palustris (strain BisA53) protein is Small ribosomal subunit protein uS15.